The sequence spans 99 residues: Beta-2-microglobulin (99 aa).

In terms of domain architecture, Ig-like C1-type spans 5 to 93 (PRVQVYSRHP…HITLSEPKIV (89 aa)). Cys-25 and Cys-80 are oxidised to a cystine.

This sequence belongs to the beta-2-microglobulin family. Heterodimer of an alpha chain and a beta chain. Beta-2-microglobulin is the beta-chain of major histocompatibility complex class I molecules.

The protein localises to the secreted. Its function is as follows. Component of the class I major histocompatibility complex (MHC). Involved in the presentation of peptide antigens to the immune system. This Cavia porcellus (Guinea pig) protein is Beta-2-microglobulin (B2M).